We begin with the raw amino-acid sequence, 207 residues long: MTLPDFRLIRLLPLASLVLTACTLPVHKEPGKSPDSPQWRQHQQEVRNLNQYQTRGAFAYISDDQKVYARFFWQQTGQDRYRLLLTNPLGSTELELNAQPGNVQLVDNKGQRYTADDAEEMIGKLTGMPIPLNSLRQWILGLPGDATDYKLDDQYRLSEVNYRQDGKNWKVVYGGYDSKTQPAMPANMELSDGSQRIKLKMDNWIVK.

The first 21 residues, 1–21 (MTLPDFRLIRLLPLASLVLTA), serve as a signal peptide directing secretion. Cysteine 22 carries the N-palmitoyl cysteine lipid modification. Cysteine 22 is lipidated: S-diacylglycerol cysteine.

The protein belongs to the LolB family. Monomer.

It localises to the cell outer membrane. Plays a critical role in the incorporation of lipoproteins in the outer membrane after they are released by the LolA protein. The chain is Outer-membrane lipoprotein LolB from Salmonella arizonae (strain ATCC BAA-731 / CDC346-86 / RSK2980).